A 562-amino-acid polypeptide reads, in one-letter code: NAD-dependent malic enzyme (562 aa).

Catalysis depends on Y101, which acts as the Proton donor. R154 is an NAD(+) binding site. The Proton acceptor role is filled by K172. 3 residues coordinate a divalent metal cation: E243, D244, and D267. NAD(+)-binding residues include D267 and N415.

It belongs to the malic enzymes family. Homotetramer. Mg(2+) serves as cofactor. Mn(2+) is required as a cofactor.

The enzyme catalyses (S)-malate + NAD(+) = pyruvate + CO2 + NADH. It carries out the reaction oxaloacetate + H(+) = pyruvate + CO2. This chain is NAD-dependent malic enzyme, found in Colwellia psychrerythraea (strain 34H / ATCC BAA-681) (Vibrio psychroerythus).